A 196-amino-acid polypeptide reads, in one-letter code: Holliday junction branch migration complex subunit RuvA (196 aa).

The domain I stretch occupies residues 1–64 (MIDRLRGQLV…EDAMLLFGFA (64 aa)). A domain II region spans residues 65–143 (TREEREAFDA…AAAGGGGGVA (79 aa)). Residues 144–153 (AGEGDGPFME) form a flexible linker region. Residues 153 to 196 (EAREALTGLGYSLEEAERALRDVPPQETVEQYIKAALRKIGGRR) form a domain III region.

It belongs to the RuvA family. In terms of assembly, homotetramer. Forms an RuvA(8)-RuvB(12)-Holliday junction (HJ) complex. HJ DNA is sandwiched between 2 RuvA tetramers; dsDNA enters through RuvA and exits via RuvB. An RuvB hexamer assembles on each DNA strand where it exits the tetramer. Each RuvB hexamer is contacted by two RuvA subunits (via domain III) on 2 adjacent RuvB subunits; this complex drives branch migration. In the full resolvosome a probable DNA-RuvA(4)-RuvB(12)-RuvC(2) complex forms which resolves the HJ.

Its subcellular location is the cytoplasm. In terms of biological role, the RuvA-RuvB-RuvC complex processes Holliday junction (HJ) DNA during genetic recombination and DNA repair, while the RuvA-RuvB complex plays an important role in the rescue of blocked DNA replication forks via replication fork reversal (RFR). RuvA specifically binds to HJ cruciform DNA, conferring on it an open structure. The RuvB hexamer acts as an ATP-dependent pump, pulling dsDNA into and through the RuvAB complex. HJ branch migration allows RuvC to scan DNA until it finds its consensus sequence, where it cleaves and resolves the cruciform DNA. In Rubrobacter xylanophilus (strain DSM 9941 / JCM 11954 / NBRC 16129 / PRD-1), this protein is Holliday junction branch migration complex subunit RuvA.